The sequence spans 129 residues: Selenoprotein M (129 aa).

The signal sequence occupies residues 1 to 19; that stretch reads MARGLAVFFLLAGACLALA. Catalysis depends on nucleophile residues Cys-35 and Sec-38. Residue Sec-38 is a non-standard amino acid, selenocysteine. A disordered region spans residues 107 to 129; it reads KSSKDEQVPEEYQEGPYMEKEEL. A Prevents secretion from ER motif is present at residues 126–129; sequence KEEL.

The protein belongs to the selenoprotein M/F family. In terms of tissue distribution, high expression levels observed in hepatopancreas, testis, ovaries and intestine. Also expressed in heart, stomach, gills, cranial ganglia, muscle and hematocytes.

It is found in the endoplasmic reticulum. In terms of biological role, may function as a thiol-disulfide oxidoreductase that participates in disulfide bond formation. Involved in the regulation of reproduction during the period of rapid gonadal development. The polypeptide is Selenoprotein M (Eriocheir sinensis (Chinese mitten crab)).